The sequence spans 338 residues: NADH-quinone oxidoreductase subunit H (338 aa).

8 consecutive transmembrane segments (helical) span residues 22–42 (VVQA…MSFI), 96–116 (VAMA…ALGV), 121–141 (IGLL…LFGG), 161–181 (ISYE…AGSF), 193–213 (VWFI…GVAV), 249–269 (YVNV…GWLA), 277–297 (FVPP…MFVL), and 315–335 (WKIC…VILM).

This sequence belongs to the complex I subunit 1 family. In terms of assembly, NDH-1 is composed of 14 different subunits. Subunits NuoA, H, J, K, L, M, N constitute the membrane sector of the complex.

The protein localises to the cell inner membrane. It carries out the reaction a quinone + NADH + 5 H(+)(in) = a quinol + NAD(+) + 4 H(+)(out). Its function is as follows. NDH-1 shuttles electrons from NADH, via FMN and iron-sulfur (Fe-S) centers, to quinones in the respiratory chain. The immediate electron acceptor for the enzyme in this species is believed to be ubiquinone. Couples the redox reaction to proton translocation (for every two electrons transferred, four hydrogen ions are translocated across the cytoplasmic membrane), and thus conserves the redox energy in a proton gradient. This subunit may bind ubiquinone. The chain is NADH-quinone oxidoreductase subunit H from Acinetobacter baumannii (strain ATCC 17978 / DSM 105126 / CIP 53.77 / LMG 1025 / NCDC KC755 / 5377).